The chain runs to 332 residues: Ribosomal RNA small subunit methyltransferase H (332 aa).

S-adenosyl-L-methionine contacts are provided by residues 42–44 (GGH), aspartate 62, phenylalanine 86, aspartate 105, and glutamine 112.

The protein belongs to the methyltransferase superfamily. RsmH family.

The protein localises to the cytoplasm. It catalyses the reaction cytidine(1402) in 16S rRNA + S-adenosyl-L-methionine = N(4)-methylcytidine(1402) in 16S rRNA + S-adenosyl-L-homocysteine + H(+). Its function is as follows. Specifically methylates the N4 position of cytidine in position 1402 (C1402) of 16S rRNA. The polypeptide is Ribosomal RNA small subunit methyltransferase H (Cupriavidus pinatubonensis (strain JMP 134 / LMG 1197) (Cupriavidus necator (strain JMP 134))).